The primary structure comprises 640 residues: Ribonuclease J (640 aa).

6 residues coordinate Zn(2+): His75, His77, Asp79, His80, His145, and Asp167. 368–372 (HVSGH) serves as a coordination point for substrate. His394 provides a ligand contact to Zn(2+). The disordered stretch occupies residues 578 to 640 (TVSATSATPA…RKRSTTSVSS (63 aa)). Over residues 598–610 (PEPKVKAKPEKKV) the composition is skewed to basic and acidic residues.

This sequence belongs to the metallo-beta-lactamase superfamily. RNA-metabolizing metallo-beta-lactamase-like family. Bacterial RNase J subfamily. Homodimer, may be a subunit of the RNA degradosome. It depends on Zn(2+) as a cofactor.

It localises to the cytoplasm. In terms of biological role, an RNase that has 5'-3' exonuclease and possibly endoonuclease activity. Involved in maturation of rRNA and in some organisms also mRNA maturation and/or decay. The protein is Ribonuclease J of Synechocystis sp. (strain ATCC 27184 / PCC 6803 / Kazusa).